Here is a 525-residue protein sequence, read N- to C-terminus: GMP synthase [glutamine-hydrolyzing] (525 aa).

The region spanning R9 to L207 is the Glutamine amidotransferase type-1 domain. C86 acts as the Nucleophile in catalysis. Catalysis depends on residues H181 and E183. Residues W208 to R400 form the GMPS ATP-PPase domain. S235–S241 provides a ligand contact to ATP.

In terms of assembly, homodimer.

It catalyses the reaction XMP + L-glutamine + ATP + H2O = GMP + L-glutamate + AMP + diphosphate + 2 H(+). It functions in the pathway purine metabolism; GMP biosynthesis; GMP from XMP (L-Gln route): step 1/1. Catalyzes the synthesis of GMP from XMP. This chain is GMP synthase [glutamine-hydrolyzing], found in Escherichia coli O17:K52:H18 (strain UMN026 / ExPEC).